Reading from the N-terminus, the 405-residue chain is Acetate kinase (405 aa).

Asn7 contacts Mg(2+). An ATP-binding site is contributed by Lys14. Arg99 contributes to the substrate binding site. The Proton donor/acceptor role is filled by Asp156. Residues 215–219 (HLGNG), 290–292 (DMR), and 338–342 (GVGEH) each bind ATP. Residue Glu391 coordinates Mg(2+).

This sequence belongs to the acetokinase family. Homodimer. Mg(2+) is required as a cofactor. It depends on Mn(2+) as a cofactor.

Its subcellular location is the cytoplasm. It carries out the reaction acetate + ATP = acetyl phosphate + ADP. The protein operates within metabolic intermediate biosynthesis; acetyl-CoA biosynthesis; acetyl-CoA from acetate: step 1/2. Functionally, catalyzes the formation of acetyl phosphate from acetate and ATP. Can also catalyze the reverse reaction. The polypeptide is Acetate kinase (Nostoc punctiforme (strain ATCC 29133 / PCC 73102)).